A 247-amino-acid chain; its full sequence is Protein LIFEGUARD 4 (247 aa).

A run of 7 helical transmembrane segments spans residues Val-42–Phe-62, Ala-75–Tyr-95, Tyr-105–Phe-125, Val-130–Phe-150, Phe-165–Leu-185, Ile-188–Asp-208, and Ile-222–Ile-242.

The protein belongs to the BI1 family.

The protein localises to the membrane. This is Protein LIFEGUARD 4 from Arabidopsis thaliana (Mouse-ear cress).